Reading from the N-terminus, the 119-residue chain is Small ribosomal subunit protein bS16 (119 aa).

The protein belongs to the bacterial ribosomal protein bS16 family.

The protein is Small ribosomal subunit protein bS16 of Amoebophilus asiaticus (strain 5a2).